Here is a 172-residue protein sequence, read N- to C-terminus: Inorganic pyrophosphatase (172 aa).

Lys-29, Arg-43, and Tyr-55 together coordinate substrate. Residues Asp-65, Asp-70, and Asp-102 each contribute to the Mg(2+) site. Residue Tyr-141 coordinates substrate.

This sequence belongs to the PPase family. As to quaternary structure, homohexamer. Requires Mg(2+) as cofactor.

The protein resides in the cytoplasm. The enzyme catalyses diphosphate + H2O = 2 phosphate + H(+). Its function is as follows. Catalyzes the hydrolysis of inorganic pyrophosphate (PPi) forming two phosphate ions. The polypeptide is Inorganic pyrophosphatase (Rickettsia prowazekii (strain Madrid E)).